Consider the following 176-residue polypeptide: 2-C-methyl-D-erythritol 2,4-cyclodiphosphate synthase (176 aa).

A divalent metal cation-binding residues include Asp-22 and His-24. 4-CDP-2-C-methyl-D-erythritol 2-phosphate is bound by residues 22-24 and 48-49; these read DVH and HS. Residue His-56 participates in a divalent metal cation binding. 4-CDP-2-C-methyl-D-erythritol 2-phosphate-binding positions include 70–72, 146–149, Phe-153, and Arg-156; these read DIG and TTSE.

It belongs to the IspF family. Homotrimer. A divalent metal cation is required as a cofactor.

The enzyme catalyses 4-CDP-2-C-methyl-D-erythritol 2-phosphate = 2-C-methyl-D-erythritol 2,4-cyclic diphosphate + CMP. Its pathway is isoprenoid biosynthesis; isopentenyl diphosphate biosynthesis via DXP pathway; isopentenyl diphosphate from 1-deoxy-D-xylulose 5-phosphate: step 4/6. Functionally, involved in the biosynthesis of isopentenyl diphosphate (IPP) and dimethylallyl diphosphate (DMAPP), two major building blocks of isoprenoid compounds. Catalyzes the conversion of 4-diphosphocytidyl-2-C-methyl-D-erythritol 2-phosphate (CDP-ME2P) to 2-C-methyl-D-erythritol 2,4-cyclodiphosphate (ME-CPP) with a corresponding release of cytidine 5-monophosphate (CMP). The protein is 2-C-methyl-D-erythritol 2,4-cyclodiphosphate synthase of Xylella fastidiosa (strain 9a5c).